We begin with the raw amino-acid sequence, 52 residues long: AANQHLCGSHLVEALYLVCGEKGFFYNPNKVGIVEQCCHKPCTIYELENYCN.

3 disulfides stabilise this stretch: cysteine 7–cysteine 38, cysteine 19–cysteine 51, and cysteine 37–cysteine 42.

The protein belongs to the insulin family. As to quaternary structure, heterodimer of a B chain and an A chain linked by two disulfide bonds.

The protein localises to the secreted. In terms of biological role, insulin decreases blood glucose concentration. It increases cell permeability to monosaccharides, amino acids and fatty acids. It accelerates glycolysis, the pentose phosphate cycle, and glycogen synthesis in liver. In Atractosteus spatula (Alligator gar), this protein is Insulin (ins).